Consider the following 134-residue polypeptide: UPF0102 protein SYNW1051 (134 aa).

The protein belongs to the UPF0102 family.

The sequence is that of UPF0102 protein SYNW1051 from Parasynechococcus marenigrum (strain WH8102).